The following is a 180-amino-acid chain: Mitochondrial membrane protein FMP33 (180 aa).

3 consecutive transmembrane segments (helical) span residues 34–54, 121–141, and 145–165; these read LYTS…LYLE, FSIV…STLG, and ILYK…YMAL.

Its subcellular location is the mitochondrion membrane. This chain is Mitochondrial membrane protein FMP33 (FMP33), found in Saccharomyces cerevisiae (strain ATCC 204508 / S288c) (Baker's yeast).